The following is a 360-amino-acid chain: Peptide chain release factor 1 (360 aa).

Q235 is subject to N5-methylglutamine.

This sequence belongs to the prokaryotic/mitochondrial release factor family. In terms of processing, methylated by PrmC. Methylation increases the termination efficiency of RF1.

It localises to the cytoplasm. Functionally, peptide chain release factor 1 directs the termination of translation in response to the peptide chain termination codons UAG and UAA. This chain is Peptide chain release factor 1, found in Burkholderia mallei (strain NCTC 10247).